Reading from the N-terminus, the 164-residue chain is uncharacterized protein (164 aa).

4 helical membrane-spanning segments follow: residues 25 to 45 (QFGF…PLLG), 63 to 83 (GMAV…VYIV), 120 to 140 (FWTA…ADFF), and 141 to 161 (TVQM…LMMM).

It belongs to the major facilitator superfamily.

The protein localises to the cell membrane. This is an uncharacterized protein from Bacillus subtilis (strain 168).